We begin with the raw amino-acid sequence, 281 residues long: 2-hydroxymuconate semialdehyde hydrolase (281 aa).

A disordered region spans residues 30 to 55; the sequence is FPALLIHGSGPASPPGPTGAGSFRSS. The region spanning 31 to 261 is the AB hydrolase-1 domain; it reads PALLIHGSGP…QCGHWTQIEH (231 aa). Catalysis depends on residues Ser106, Asp227, and His255.

It belongs to the DmpD/TodF/XylF esterase family.

The catalysed reaction is (2Z,4E)-2-hydroxy-6-oxohexa-2,4-dienoate + H2O = 2-oxopent-4-enoate + formate + H(+). It participates in aromatic compound metabolism; benzoate degradation via hydroxylation. Functionally, catalyzes the conversion of 2-hydroxymuconate semialdehyde to 2-hydroxypent-2,4-dienoate. The chain is 2-hydroxymuconate semialdehyde hydrolase (xylF) from Pseudomonas putida (Arthrobacter siderocapsulatus).